The chain runs to 199 residues: Protein-methionine-sulfoxide reductase heme-binding subunit MsrQ (199 aa).

4 helical membrane-spanning segments follow: residues 8–28 (IIWL…WLFW), 82–102 (LWCF…ELGI), 116–136 (PYLT…LTST), and 153–173 (VVYL…KVLS).

Belongs to the MsrQ family. In terms of assembly, heterodimer of a catalytic subunit (MsrP) and a heme-binding subunit (MsrQ). It depends on FMN as a cofactor. Heme b serves as cofactor.

Its subcellular location is the cell inner membrane. Part of the MsrPQ system that repairs oxidized periplasmic proteins containing methionine sulfoxide residues (Met-O), using respiratory chain electrons. Thus protects these proteins from oxidative-stress damage caused by reactive species of oxygen and chlorine generated by the host defense mechanisms. MsrPQ is essential for the maintenance of envelope integrity under bleach stress, rescuing a wide series of structurally unrelated periplasmic proteins from methionine oxidation, including the primary periplasmic chaperone SurA and the lipoprotein Pal. MsrQ provides electrons for reduction to the reductase catalytic subunit MsrP, using the quinone pool of the respiratory chain. The protein is Protein-methionine-sulfoxide reductase heme-binding subunit MsrQ of Salmonella arizonae (strain ATCC BAA-731 / CDC346-86 / RSK2980).